The following is a 165-amino-acid chain: uncharacterized protein (165 aa).

The first 17 residues, 1–17, serve as a signal peptide directing secretion; the sequence is MIRGFFLILLFLLLAFF.

This is an uncharacterized protein from Aquifex aeolicus (strain VF5).